Reading from the N-terminus, the 205-residue chain is Ribosome maturation factor RimP (205 aa).

The protein belongs to the RimP family.

The protein localises to the cytoplasm. In terms of biological role, required for maturation of 30S ribosomal subunits. This Sinorhizobium medicae (strain WSM419) (Ensifer medicae) protein is Ribosome maturation factor RimP.